Reading from the N-terminus, the 876-residue chain is Alanine--tRNA ligase (876 aa).

Zn(2+)-binding residues include His564, His568, Cys666, and His670.

The protein belongs to the class-II aminoacyl-tRNA synthetase family. Homotetramer. It depends on Zn(2+) as a cofactor.

The protein localises to the cytoplasm. It catalyses the reaction tRNA(Ala) + L-alanine + ATP = L-alanyl-tRNA(Ala) + AMP + diphosphate. Functionally, catalyzes the attachment of alanine to tRNA(Ala) in a two-step reaction: alanine is first activated by ATP to form Ala-AMP and then transferred to the acceptor end of tRNA(Ala). Also edits incorrectly charged Ser-tRNA(Ala) and Gly-tRNA(Ala) via its editing domain. The protein is Alanine--tRNA ligase of Salmonella paratyphi B (strain ATCC BAA-1250 / SPB7).